A 188-amino-acid chain; its full sequence is Elongation factor P (188 aa).

This sequence belongs to the elongation factor P family.

The protein localises to the cytoplasm. It functions in the pathway protein biosynthesis; polypeptide chain elongation. Its function is as follows. Involved in peptide bond synthesis. Stimulates efficient translation and peptide-bond synthesis on native or reconstituted 70S ribosomes in vitro. Probably functions indirectly by altering the affinity of the ribosome for aminoacyl-tRNA, thus increasing their reactivity as acceptors for peptidyl transferase. In Exiguobacterium sp. (strain ATCC BAA-1283 / AT1b), this protein is Elongation factor P.